Here is an 814-residue protein sequence, read N- to C-terminus: Phenylalanine--tRNA ligase beta subunit (814 aa).

A tRNA-binding domain is found at 39–153 (SKNVNGVVLG…LKHELGTPVS (115 aa)). Residues 414–500 (NEDIFIKLRR…RLIGYDRFDL (87 aa)) form the B5 domain. Mg(2+)-binding residues include Asp-478, Asp-484, Glu-487, and Glu-488. Residues 720-813 (PIVPKIERDI…IEKSFQTKLR (94 aa)) form the FDX-ACB domain.

It belongs to the phenylalanyl-tRNA synthetase beta subunit family. Type 1 subfamily. In terms of assembly, tetramer of two alpha and two beta subunits. Mg(2+) is required as a cofactor.

It localises to the cytoplasm. The enzyme catalyses tRNA(Phe) + L-phenylalanine + ATP = L-phenylalanyl-tRNA(Phe) + AMP + diphosphate + H(+). This is Phenylalanine--tRNA ligase beta subunit from Prochlorococcus marinus (strain MIT 9312).